The primary structure comprises 221 residues: Lipoprotein-releasing system ATP-binding protein LolD (221 aa).

An ABC transporter domain is found at 8–220; it reads LKMISKHYKQ…YNLKHGLLNI (213 aa). ATP is bound at residue 42–49; that stretch reads GSSGSGKS.

Belongs to the ABC transporter superfamily. Lipoprotein translocase (TC 3.A.1.125) family. The complex is composed of two ATP-binding proteins (LolD) and two transmembrane proteins (LolC and LolE).

It is found in the cell inner membrane. Its function is as follows. Part of the ABC transporter complex LolCDE involved in the translocation of mature outer membrane-directed lipoproteins, from the inner membrane to the periplasmic chaperone, LolA. Responsible for the formation of the LolA-lipoprotein complex in an ATP-dependent manner. This chain is Lipoprotein-releasing system ATP-binding protein LolD, found in Rickettsia prowazekii (strain Madrid E).